The primary structure comprises 415 residues: Gamma-glutamyl phosphate reductase (415 aa).

Belongs to the gamma-glutamyl phosphate reductase family.

It localises to the cytoplasm. It carries out the reaction L-glutamate 5-semialdehyde + phosphate + NADP(+) = L-glutamyl 5-phosphate + NADPH + H(+). Its pathway is amino-acid biosynthesis; L-proline biosynthesis; L-glutamate 5-semialdehyde from L-glutamate: step 2/2. In terms of biological role, catalyzes the NADPH-dependent reduction of L-glutamate 5-phosphate into L-glutamate 5-semialdehyde and phosphate. The product spontaneously undergoes cyclization to form 1-pyrroline-5-carboxylate. This chain is Gamma-glutamyl phosphate reductase, found in Listeria monocytogenes serotype 4b (strain F2365).